The following is a 639-amino-acid chain: tRNA uridine 5-carboxymethylaminomethyl modification enzyme MnmG (639 aa).

13–18 contributes to the FAD binding site; sequence GGGHAG. Residue 274 to 288 coordinates NAD(+); that stretch reads GPRYCPSIEDKIHRF.

This sequence belongs to the MnmG family. As to quaternary structure, homodimer. Heterotetramer of two MnmE and two MnmG subunits. Requires FAD as cofactor.

It localises to the cytoplasm. Functionally, NAD-binding protein involved in the addition of a carboxymethylaminomethyl (cmnm) group at the wobble position (U34) of certain tRNAs, forming tRNA-cmnm(5)s(2)U34. The chain is tRNA uridine 5-carboxymethylaminomethyl modification enzyme MnmG from Polynucleobacter asymbioticus (strain DSM 18221 / CIP 109841 / QLW-P1DMWA-1) (Polynucleobacter necessarius subsp. asymbioticus).